Here is a 218-residue protein sequence, read N- to C-terminus: Oxidative stress regulator AosR (218 aa).

The CXXXC motif lies at 5 to 9; the sequence is CGRRC. An intrachain disulfide couples C5 to C9.

Belongs to the AosR family. Homodimer. Under oxidative stress, interacts with the extracytoplasmic-function (ECF) RNA polymerase sigma factor SigH.

Activity is modulated by the formation of a disulfide bound within the N-terminal Cys-X-X-X-Cys (CXXXC) motif. This intramolecular disulfide bond is formed in response to oxidative stress, and results in oxidative stress-dependent interaction with the sigma factor SigH. In terms of biological role, transcription factor crucial for intra-mycobacterial redox homeostasis and protection against host-derived oxidative and nitrosative radicals. In response to oxidative stress, interacts with the ECF sigma factor SigH and, in conjunction with SigH, binds to an auxiliary promoter upstream of mec-cysO-cysM, leading to the transcriptional activation of these genes encoding a non-canonical actinomycete-specific cysteine biosynthesis pathway. Increased transcription of mec-cysO-cysM results in enhanced production of L-cysteine and cysteine-derived antioxidant molecules. Increased production of cysteine protects mycobacteria cells from host phagocyte-derived oxidative and nitrosative stress, thus facilitating the mycobacterial growth in the host. The protein is Oxidative stress regulator AosR of Mycobacterium bovis (strain ATCC BAA-935 / AF2122/97).